The following is a 605-amino-acid chain: DNA mismatch repair protein MutL (605 aa).

It belongs to the DNA mismatch repair MutL/HexB family.

This protein is involved in the repair of mismatches in DNA. It is required for dam-dependent methyl-directed DNA mismatch repair. May act as a 'molecular matchmaker', a protein that promotes the formation of a stable complex between two or more DNA-binding proteins in an ATP-dependent manner without itself being part of a final effector complex. This chain is DNA mismatch repair protein MutL, found in Pelotomaculum thermopropionicum (strain DSM 13744 / JCM 10971 / SI).